We begin with the raw amino-acid sequence, 144 residues long: Granulocyte-macrophage colony-stimulating factor (144 aa).

A signal peptide spans M1–S17. A glycan (O-linked (GalNAc...) serine) is linked at S24. Residue T27 is glycosylated (O-linked (GalNAc...) threonine). Residues N44 and N54 are each glycosylated (N-linked (GlcNAc...) asparagine). Intrachain disulfides connect C71–C113 and C105–C138.

It belongs to the GM-CSF family. In terms of assembly, monomer. The signaling GM-CSF receptor complex is a dodecamer of two head-to-head hexamers of two alpha, two beta, and two ligand subunits.

Its subcellular location is the secreted. Functionally, cytokine that stimulates the growth and differentiation of hematopoietic precursor cells from various lineages, including granulocytes, macrophages, eosinophils and erythrocytes. This chain is Granulocyte-macrophage colony-stimulating factor (CSF2), found in Chlorocebus aethiops (Green monkey).